We begin with the raw amino-acid sequence, 289 residues long: ATP synthase gamma chain (289 aa).

It belongs to the ATPase gamma chain family. F-type ATPases have 2 components, CF(1) - the catalytic core - and CF(0) - the membrane proton channel. CF(1) has five subunits: alpha(3), beta(3), gamma(1), delta(1), epsilon(1). CF(0) has three main subunits: a, b and c.

The protein resides in the cell inner membrane. Produces ATP from ADP in the presence of a proton gradient across the membrane. The gamma chain is believed to be important in regulating ATPase activity and the flow of protons through the CF(0) complex. This chain is ATP synthase gamma chain, found in Polynucleobacter asymbioticus (strain DSM 18221 / CIP 109841 / QLW-P1DMWA-1) (Polynucleobacter necessarius subsp. asymbioticus).